The sequence spans 81 residues: CLAVATA3/ESR (CLE)-related protein 6 (81 aa).

The first 26 residues, 1–26 (MANLILKQSLIILLIIYSTPILSSQA), serve as a signal peptide directing secretion. Residues Pro-73 and Pro-76 each carry the hydroxyproline modification. O-linked (Ara...) hydroxyproline glycosylation occurs at Pro-76.

Belongs to the CLV3/ESR signal peptide family. Post-translationally, the O-glycosylation (arabinosylation) of the hydroxyproline Pro-76 enhances binding affinity of the CLE6p peptide for its receptor. Mostly expressed in roots, seedlings, stems and flowers, and, to a lower extent, in apex and siliques.

The protein localises to the secreted. It localises to the extracellular space. In terms of biological role, extracellular signal peptide that regulates cell fate. This chain is CLAVATA3/ESR (CLE)-related protein 6, found in Arabidopsis thaliana (Mouse-ear cress).